Here is a 138-residue protein sequence, read N- to C-terminus: Dehydratase iacD (138 aa).

The EthD domain maps to 18 to 113; that stretch reads GVSEEDFIEW…LKDQDVWMDN (96 aa).

This sequence belongs to the tpcK family.

The protein operates within secondary metabolite biosynthesis. Functionally, dehydratase; part of the gene cluster that mediates the biosynthesis of iso-A82775C, a enylepoxycyclohexane and biosynthetic precursor of the chloropestolide anticancer natural products. Within the cluster, the prenyltransferase iacE prenylates siccayne to generate pestalodiol E, using dimethylallyl diphosphate (DMAPP) as cosubstrate. The probable oxidoreductase iacF is then involved in the epoxidation of pestalodiol F to pestalodiol F, which is further converted to pestalofone A by the short-chain dehydrogenase/reductase iacG. Iso-A82775C is subsequently generated from pestalofone A by the short-chain dehydrogenase/reductase iacC. Iso-A82775C is further condensed with maldoxin via a Diels-Alder reaction to produce the anticancer natural products chloropestolides A to E. The chain is Dehydratase iacD from Pestalotiopsis fici (strain W106-1 / CGMCC3.15140).